The primary structure comprises 194 residues: Leucyl/phenylalanyl-tRNA--protein transferase (194 aa).

It belongs to the L/F-transferase family.

Its subcellular location is the cytoplasm. The catalysed reaction is N-terminal L-lysyl-[protein] + L-leucyl-tRNA(Leu) = N-terminal L-leucyl-L-lysyl-[protein] + tRNA(Leu) + H(+). It catalyses the reaction N-terminal L-arginyl-[protein] + L-leucyl-tRNA(Leu) = N-terminal L-leucyl-L-arginyl-[protein] + tRNA(Leu) + H(+). It carries out the reaction L-phenylalanyl-tRNA(Phe) + an N-terminal L-alpha-aminoacyl-[protein] = an N-terminal L-phenylalanyl-L-alpha-aminoacyl-[protein] + tRNA(Phe). Its function is as follows. Functions in the N-end rule pathway of protein degradation where it conjugates Leu, Phe and, less efficiently, Met from aminoacyl-tRNAs to the N-termini of proteins containing an N-terminal arginine or lysine. The sequence is that of Leucyl/phenylalanyl-tRNA--protein transferase from Pelodictyon phaeoclathratiforme (strain DSM 5477 / BU-1).